The following is a 638-amino-acid chain: Golgin subfamily A member 8S (638 aa).

Residues 1–11 (MWPQARLPPHP) show a composition bias toward pro residues. Positions 1–84 (MWPQARLPPH…GESPTSSATL (84 aa)) are disordered. Over residues 50–62 (TNGSIHETATSGG) the composition is skewed to polar residues. 3 coiled-coil regions span residues 105 to 160 (VSQL…LNTD), 223 to 275 (LEQS…MSQE), and 318 to 417 (EAEL…QQKQ). 3 disordered regions span residues 427-453 (ALPG…PSIP), 510-532 (KDAA…DEAA), and 556-575 (AHNP…ELGA). Residues 434 to 446 (GGGHLDSEGEEAP) show a composition bias toward basic and acidic residues. A compositionally biased stretch (gly residues) spans 514 to 525 (LGGGHHQAGAQG). The span at 561–574 (DEPGPGAPAPQELG) shows a compositional bias: low complexity.

It belongs to the GOLGA8 family.

In Homo sapiens (Human), this protein is Golgin subfamily A member 8S.